Consider the following 962-residue polypeptide: Glycine dehydrogenase (decarboxylating) (962 aa).

An N6-(pyridoxal phosphate)lysine modification is found at K709.

It belongs to the GcvP family. The glycine cleavage system is composed of four proteins: P, T, L and H. Requires pyridoxal 5'-phosphate as cofactor.

It catalyses the reaction N(6)-[(R)-lipoyl]-L-lysyl-[glycine-cleavage complex H protein] + glycine + H(+) = N(6)-[(R)-S(8)-aminomethyldihydrolipoyl]-L-lysyl-[glycine-cleavage complex H protein] + CO2. Functionally, the glycine cleavage system catalyzes the degradation of glycine. The P protein binds the alpha-amino group of glycine through its pyridoxal phosphate cofactor; CO(2) is released and the remaining methylamine moiety is then transferred to the lipoamide cofactor of the H protein. In Shewanella putrefaciens (strain CN-32 / ATCC BAA-453), this protein is Glycine dehydrogenase (decarboxylating).